The following is a 296-amino-acid chain: ATP phosphoribosyltransferase (296 aa).

Belongs to the ATP phosphoribosyltransferase family. Long subfamily. Mg(2+) serves as cofactor.

It localises to the cytoplasm. It carries out the reaction 1-(5-phospho-beta-D-ribosyl)-ATP + diphosphate = 5-phospho-alpha-D-ribose 1-diphosphate + ATP. It functions in the pathway amino-acid biosynthesis; L-histidine biosynthesis; L-histidine from 5-phospho-alpha-D-ribose 1-diphosphate: step 1/9. With respect to regulation, feedback inhibited by histidine. Its function is as follows. Catalyzes the condensation of ATP and 5-phosphoribose 1-diphosphate to form N'-(5'-phosphoribosyl)-ATP (PR-ATP). Has a crucial role in the pathway because the rate of histidine biosynthesis seems to be controlled primarily by regulation of HisG enzymatic activity. The sequence is that of ATP phosphoribosyltransferase from Halorubrum lacusprofundi (strain ATCC 49239 / DSM 5036 / JCM 8891 / ACAM 34).